A 225-amino-acid polypeptide reads, in one-letter code: Cbp/p300-interacting transactivator 2 (225 aa).

It belongs to the CITED family.

It is found in the nucleus. Functionally, transcriptional coactivator or corepressor of the p300/CBP-mediated transcription complex. May be involved in sex determination, early gonad development, left-right patterning during embryogenesis and differentiation of the adrenal cortex. The sequence is that of Cbp/p300-interacting transactivator 2 (cited2) from Xenopus laevis (African clawed frog).